A 249-amino-acid chain; its full sequence is MAAKHVKYMACLFDMDGLLVDSETIYTKTTNLILDRYGKDPLPISVKAQMMGRPGSAAAKVVIDWSNIPMTPQQFVDEQQVIRAKFWSSLKPMPGAESLINNLSNHGIDIGLATSSNTANYNMKTAHLKHIFEKFGKNVITGDNPSIAPGRGKPFPDIWLKVLNLINESRKQRGLKALTPSQCIAFEDSIPGVKSAKAAGMHVIWVPDAAIKNLVGDQLNEIVDSQCETLPSLSEFDINKYLNINSKQA.

Belongs to the HAD-like hydrolase superfamily. CbbY/CbbZ/Gph/YieH family.

This is an uncharacterized protein from Schizosaccharomyces pombe (strain 972 / ATCC 24843) (Fission yeast).